A 169-amino-acid polypeptide reads, in one-letter code: S-ribosylhomocysteine lyase (169 aa).

Fe cation-binding residues include His54, His58, and Cys129.

It belongs to the LuxS family. In terms of assembly, homodimer. Fe cation is required as a cofactor.

The enzyme catalyses S-(5-deoxy-D-ribos-5-yl)-L-homocysteine = (S)-4,5-dihydroxypentane-2,3-dione + L-homocysteine. Its function is as follows. Involved in the synthesis of autoinducer 2 (AI-2) which is secreted by bacteria and is used to communicate both the cell density and the metabolic potential of the environment. The regulation of gene expression in response to changes in cell density is called quorum sensing. Catalyzes the transformation of S-ribosylhomocysteine (RHC) to homocysteine (HC) and 4,5-dihydroxy-2,3-pentadione (DPD). The sequence is that of S-ribosylhomocysteine lyase from Haemophilus ducreyi (strain 35000HP / ATCC 700724).